The primary structure comprises 211 residues: Large ribosomal subunit protein bL9 (211 aa).

Positions 183-211 (AAASEDEELAETAGVAPAEPSEEDDSAKA) are disordered. A compositionally biased stretch (acidic residues) spans 202–211 (PSEEDDSAKA).

Belongs to the bacterial ribosomal protein bL9 family.

Binds to the 23S rRNA. In Roseobacter denitrificans (strain ATCC 33942 / OCh 114) (Erythrobacter sp. (strain OCh 114)), this protein is Large ribosomal subunit protein bL9.